A 56-amino-acid chain; its full sequence is Photosystem II reaction center protein K (56 aa).

The propeptide occupies 1–19 (MFNIFLDDAFIHSNNPFFG). The chain crosses the membrane as a helical span at residues 35–55 (MPIIPVLSFLLAFVWQAAVSF).

The protein belongs to the PsbK family. PSII is composed of 1 copy each of membrane proteins PsbA, PsbB, PsbC, PsbD, PsbE, PsbF, PsbH, PsbI, PsbJ, PsbK, PsbL, PsbM, PsbT, PsbX, PsbY, PsbZ, Psb30/Ycf12, at least 3 peripheral proteins of the oxygen-evolving complex and a large number of cofactors. It forms dimeric complexes.

It is found in the plastid. It localises to the chloroplast thylakoid membrane. One of the components of the core complex of photosystem II (PSII). PSII is a light-driven water:plastoquinone oxidoreductase that uses light energy to abstract electrons from H(2)O, generating O(2) and a proton gradient subsequently used for ATP formation. It consists of a core antenna complex that captures photons, and an electron transfer chain that converts photonic excitation into a charge separation. This is Photosystem II reaction center protein K from Pinus thunbergii (Japanese black pine).